The chain runs to 88 residues: U24 protein (88 aa).

Phosphothreonine is present on T6. A PPXY motif motif is present at residues 8 to 11 (PPSY). A helical transmembrane segment spans residues 58 to 78 (FAFLVLTGLAIAMILFIAFVI).

As to quaternary structure, interacts with host ITCH; this interaction probably mediates ITCH degradation. Interacts probably with NEDD4.

It localises to the membrane. Functionally, down-regulates the TCR/CD3E complex and the transferrin receptor TFRC in host T-cells by blocking them from recycling back to the cell surface. The protein is U24 protein (U24) of Human herpesvirus 6B (strain Z29) (HHV-6 variant B).